Here is a 107-residue protein sequence, read N- to C-terminus: Putative septation protein SpoVG (107 aa).

The tract at residues 82 to 107 is disordered; that stretch reads ETDEVIPDKNAQPSSDSEDNGSEEEA. Over residues 97–107 the composition is skewed to acidic residues; sequence DSEDNGSEEEA.

Belongs to the SpoVG family.

In terms of biological role, could be involved in septation. This is Putative septation protein SpoVG from Staphylococcus carnosus (strain TM300).